The chain runs to 146 residues: Leghemoglobin Lb120-8 (146 aa).

The 145-residue stretch at 2-146 folds into the Globin domain; sequence GFTEKQEALV…LASAIKKAMN (145 aa). Nitrated tyrosine occurs at positions 24 and 29. A heme b-binding site is contributed by serine 44. Serine 44 is modified (phosphoserine). Residue histidine 61 participates in O2 binding. Heme b contacts are provided by lysine 64, histidine 93, and lysine 96. Nitrated tyrosine is present on tyrosine 134.

Belongs to the plant globin family. Monomer. Nitrated in effective nodules and particularly in hypoxic conditions; this mechanism may play a protective role in the symbiosis by buffering toxic peroxynitrite NO(2)(-). Nitration level decrease during nodule senescence. In terms of processing, phosphorylation at Ser-44 disrupts the molecular environment of its porphyrin ring oxygen binding pocket, thus leading to a reduced oxygen consumption and to the delivery of oxygen O(2) to symbiosomes. As to expression, root nodules.

The protein resides in the cytoplasm. Its subcellular location is the cytosol. It localises to the nucleus. Its function is as follows. Leghemoglobin that reversibly binds oxygen O(2) through a pentacoordinated heme iron. In root nodules, facilitates the diffusion of oxygen to the bacteroids while preventing the bacterial nitrogenase from being inactivated by buffering dioxygen, nitric oxide and carbon monoxide, and promoting the formation of reactive oxygen species (ROS, e.g. H(2)O(2)). This role is essential for symbiotic nitrogen fixation (SNF). The chain is Leghemoglobin Lb120-8 from Pisum sativum (Garden pea).